A 626-amino-acid chain; its full sequence is Glycosyltransferase 25 family member (626 aa).

Residues 1–21 (MLKKQVFYGILLICAFVCIYG) form the signal peptide. 4 N-linked (GlcNAc...) asparagine glycosylation sites follow: Asn-113, Asn-234, Asn-272, and Asn-533. Residues 623–626 (HQEL) carry the Prevents secretion from ER motif.

This sequence belongs to the glycosyltransferase 25 family.

It localises to the endoplasmic reticulum lumen. The sequence is that of Glycosyltransferase 25 family member from Drosophila pseudoobscura pseudoobscura (Fruit fly).